A 498-amino-acid polypeptide reads, in one-letter code: Galactose-1-phosphate uridylyltransferase (498 aa).

Belongs to the galactose-1-phosphate uridylyltransferase type 2 family.

It is found in the cytoplasm. The enzyme catalyses alpha-D-galactose 1-phosphate + UDP-alpha-D-glucose = alpha-D-glucose 1-phosphate + UDP-alpha-D-galactose. Its pathway is carbohydrate metabolism; galactose metabolism. The protein is Galactose-1-phosphate uridylyltransferase of Clostridium perfringens (strain 13 / Type A).